Here is a 190-residue protein sequence, read N- to C-terminus: Lipid A acyltransferase PagP (190 aa).

The signal sequence occupies residues 1 to 24; it reads MNRYLLTTLSAPLLALFFSFSLQA. Active-site residues include H62, D105, and S106.

It belongs to the lipid A palmitoyltransferase family. As to quaternary structure, homodimer.

The protein localises to the cell outer membrane. The catalysed reaction is a lipid A + a 1,2-diacyl-sn-glycero-3-phosphocholine = a hepta-acyl lipid A + a 2-acyl-sn-glycero-3-phosphocholine. It carries out the reaction a lipid IVA + a 1,2-diacyl-sn-glycero-3-phosphocholine = a lipid IVB + a 2-acyl-sn-glycero-3-phosphocholine. The enzyme catalyses a lipid IIA + a 1,2-diacyl-sn-glycero-3-phosphocholine = a lipid IIB + a 2-acyl-sn-glycero-3-phosphocholine. Transfers a fatty acid residue from the sn-1 position of a phospholipid to the N-linked hydroxyfatty acid chain on the proximal unit of lipid A or its precursors. The polypeptide is Lipid A acyltransferase PagP (Pantoea ananatis (strain LMG 20103)).